The primary structure comprises 59 residues: Dendroaspin (59 aa).

Intrachain disulfides connect Cys3–Cys22, Cys17–Cys37, Cys39–Cys51, and Cys52–Cys57. The Cell attachment site signature appears at 43–45 (RGD).

It belongs to the three-finger toxin family. Short-chain subfamily. Antiplatelet toxin sub-subfamily. Expressed by the venom gland.

The protein localises to the secreted. Inhibits ADP-induced platelet aggregation and inhibits the binding of purified platelet fibrinogen receptor alpha-IIb/beta-3 (ITGA2B/ITGB3) to immobilized fibrinogen. Has also been described to inhibit cell adhesion to fibrinogen, fibronectin, laminin and collagen. This Dendroaspis jamesoni kaimosae (Eastern Jameson's mamba) protein is Dendroaspin.